The following is a 413-amino-acid chain: Serine/threonine transporter SstT (413 aa).

A run of 8 helical transmembrane segments spans residues 19–39, 61–81, 89–109, 148–168, 189–209, 223–243, 297–317, and 325–345; these read IFIG…LQNV, AVAP…KKIG, IIVL…IAGF, ALFK…GLAL, IVYV…SETL, LLAV…PILV, IPLG…ILTL, and IQIS…CACG.

The protein belongs to the dicarboxylate/amino acid:cation symporter (DAACS) (TC 2.A.23) family.

Its subcellular location is the cell inner membrane. It carries out the reaction L-serine(in) + Na(+)(in) = L-serine(out) + Na(+)(out). The catalysed reaction is L-threonine(in) + Na(+)(in) = L-threonine(out) + Na(+)(out). Its function is as follows. Involved in the import of serine and threonine into the cell, with the concomitant import of sodium (symport system). This is Serine/threonine transporter SstT from Pasteurella multocida (strain Pm70).